The following is a 1447-amino-acid chain: Regulator of G-protein signaling 12 (1447 aa).

The interval 1 to 21 (MFRAGEASKRPLPGPSPPRVR) is disordered. The 77-residue stretch at 22–98 (SVEVARGRAG…GVLHMVIAEG (77 aa)) folds into the PDZ domain. A phosphoserine mark is found at S172 and S195. Residue K196 forms a Glycyl lysine isopeptide (Lys-Gly) (interchain with G-Cter in SUMO2) linkage. One can recognise a PID domain in the interval 228–340 (VAMIVGYLGS…GALRTSCHVF (113 aa)). 2 disordered regions span residues 410–429 (ADAHQNNSTSSNSDSGIGNF) and 443–482 (LGGSSSRHGPGGSAWDGVGGRGAQPWGAPWTGPFCPDPEG). Residues 413–425 (HQNNSTSSNSDSG) are compositionally biased toward polar residues. Gly residues predominate over residues 451–464 (GPGGSAWDGVGGRG). Omega-N-methylarginine is present on residues R524 and R633. Residues 618-652 (NVRKTKEDKKGSKFGRGTGLTQPSQRTSARRSFGR) form a disordered region. 2 positions are modified to phosphoserine: S661 and S671. One can recognise an RGS domain in the interval 715 to 832 (SFERLLQDPV…LKSPLYQECI (118 aa)). The span at 843–853 (DSQQVPSSPAS) shows a compositional bias: polar residues. Residues 843–941 (DSQQVPSSPA…RESQGSVSSA (99 aa)) are disordered. Residues S850 and S879 each carry the phosphoserine modification. Over residues 914 to 923 (EHGDHADDAL) the composition is skewed to basic and acidic residues. S943 is modified (phosphoserine). 2 consecutive RBD domains span residues 962 to 1032 (KHCC…LEKR) and 1034 to 1104 (LFRL…LEEK). Residues 1103–1117 (EKDPSRGKASADKQK) are compositionally biased toward basic and acidic residues. The segment at 1103–1169 (EKDPSRGKAS…RDPRLSKREE (67 aa)) is disordered. The segment covering 1122–1136 (KQNTAVNSSSRNHSA) has biased composition (polar residues). A compositionally biased stretch (basic and acidic residues) spans 1151–1169 (IKGENGKNARDPRLSKREE). The GoLoco domain maps to 1187–1209 (AEEFFELISKAQSNRADDQRGLL). Residues 1240 to 1447 (GFSKRSATGN…KTSAHHATFV (208 aa)) are disordered. Residues 1244–1258 (RSATGNGRESASQPG) show a composition bias toward polar residues. Composition is skewed to low complexity over residues 1267-1280 (SSDSPSTSPGSASS) and 1289-1298 (PPGQKSPSGP). Residues 1301 to 1313 (TPQSPVSLAQEGT) show a composition bias toward polar residues.

In terms of assembly, interacts with GNAI1. Interacts with GNAI2 and GNAI3; the interactions are GDP-dependent. In terms of tissue distribution, isoform 3 is brain specific.

It localises to the nucleus. Its subcellular location is the cytoplasm. It is found in the cell projection. The protein resides in the dendrite. The protein localises to the synapse. It localises to the nucleus matrix. Its function is as follows. Regulates G protein-coupled receptor signaling cascades. Inhibits signal transduction by increasing the GTPase activity of G protein alpha subunits, thereby driving them into their inactive GDP-bound form. In terms of biological role, behaves as a cell cycle-dependent transcriptional repressor, promoting inhibition of S-phase DNA synthesis. The polypeptide is Regulator of G-protein signaling 12 (RGS12) (Homo sapiens (Human)).